A 460-amino-acid polypeptide reads, in one-letter code: Attachment protein G3P (460 aa).

The N-terminal stretch at methionine 1–histidine 16 is a signal peptide. The segment at threonine 18–glycine 79 is N1. Residues cysteine 23 and cysteine 50 are joined by a disulfide bond. Residues alanine 76–proline 115 form a disordered region. A compositionally biased stretch (gly residues) spans serine 80 to glycine 95. Residues serine 80 to asparagine 100 form a G1 (Gly-rich linker) region. The segment covering threonine 102–proline 115 has biased composition (polar residues). Positions aspartate 184 to alanine 249 are N2. The interval glycine 277–asparagine 300 is disordered. Residues asparagine 279 to asparagine 300 show a composition bias toward gly residues. The interval aspartate 306–glycine 460 is CT. The helical transmembrane segment at isoleucine 434–isoleucine 454 threads the bilayer.

It belongs to the inovirus G3P protein family. As to quaternary structure, interacts with G6P; this interaction is required for proper integration of G3P and G6P into the virion. Interacts with G8P. Interacts with the tip of the host pilus. Interacts (via N-terminus) with host TolA.

The protein resides in the virion. The protein localises to the host membrane. Functionally, plays essential roles both in the penetration of the viral genome into the bacterial host via pilus retraction and in the extrusion process. During the initial step of infection, G3P mediates adsorption of the phage to its primary receptor, the tip of host I-pilus. Attachment of the phage causes pilus retraction bringing the viral particle into close proximity of the host cell inner membrane. Subsequent interaction with the host entry receptors TolA and penetration of the viral DNA into the host cytoplasm. In the extrusion process, G3P mediates the release of the membrane-anchored virion from the cell via its C-terminal domain. This chain is Attachment protein G3P (III), found in Escherichia coli (Bacteriophage If1).